We begin with the raw amino-acid sequence, 373 residues long: Anhydro-N-acetylmuramic acid kinase (373 aa).

Position 13 to 20 (Gly13 to Asp20) interacts with ATP.

It belongs to the anhydro-N-acetylmuramic acid kinase family.

It catalyses the reaction 1,6-anhydro-N-acetyl-beta-muramate + ATP + H2O = N-acetyl-D-muramate 6-phosphate + ADP + H(+). The protein operates within amino-sugar metabolism; 1,6-anhydro-N-acetylmuramate degradation. Its pathway is cell wall biogenesis; peptidoglycan recycling. Its function is as follows. Catalyzes the specific phosphorylation of 1,6-anhydro-N-acetylmuramic acid (anhMurNAc) with the simultaneous cleavage of the 1,6-anhydro ring, generating MurNAc-6-P. Is required for the utilization of anhMurNAc either imported from the medium or derived from its own cell wall murein, and thus plays a role in cell wall recycling. This is Anhydro-N-acetylmuramic acid kinase from Brucella suis (strain ATCC 23445 / NCTC 10510).